Reading from the N-terminus, the 440-residue chain is MSYNYFGKKILILGLGLTGISCINFFLKKGIQPRVIDESNKPIFLNKIPKNIEYKLGNLKENWILESDLIIISPGISSFKPILMKARSLGIDIISDIELFSRETKCPIISITGTNGKSTVATMVKKIAEKSGYKVLLGGNIGFPVLEMLNKKASLYVLELSSFQLETTFNLKSKIAVVLNITEDHLDRYPEGFEQYKKTKLSIYNKAKICLIKLKKGEKKPFNTKSKKYISFGTCNNNDYYINYEKEKAILFHKNKKIVDTSNILLNGHHNYENILTSLAISDQMKFDQKVSINVLKKFLGLPHRFQTVHINNNISWINDSKSTNVDSTKAALKNLKIKGTIWLLLGGDGKSSNFNILKKYFEKIKIKIYCFGKDGLNLSKLCKKKSIYTKTLKQAIILISKKIQPGDVVLLSPGCSSKDQFSNFEERGNLFIKLSKEIN.

Residue 113-119 (GTNGKST) coordinates ATP.

The protein belongs to the MurCDEF family.

Its subcellular location is the cytoplasm. It carries out the reaction UDP-N-acetyl-alpha-D-muramoyl-L-alanine + D-glutamate + ATP = UDP-N-acetyl-alpha-D-muramoyl-L-alanyl-D-glutamate + ADP + phosphate + H(+). The protein operates within cell wall biogenesis; peptidoglycan biosynthesis. Its function is as follows. Cell wall formation. Catalyzes the addition of glutamate to the nucleotide precursor UDP-N-acetylmuramoyl-L-alanine (UMA). The sequence is that of UDP-N-acetylmuramoylalanine--D-glutamate ligase (murD) from Buchnera aphidicola subsp. Schizaphis graminum (strain Sg).